We begin with the raw amino-acid sequence, 89 residues long: Large ribosomal subunit protein bL27 (89 aa).

The tract at residues 1–22 (MAHKKAGGSSRNGRDSAGRRLG) is disordered.

This sequence belongs to the bacterial ribosomal protein bL27 family.

This Dinoroseobacter shibae (strain DSM 16493 / NCIMB 14021 / DFL 12) protein is Large ribosomal subunit protein bL27.